Consider the following 537-residue polypeptide: CTP synthase (537 aa).

Residues 1 to 265 (MTKFIFVTGG…GKYLIKRLKL (265 aa)) form an amidoligase domain region. Serine 13 provides a ligand contact to CTP. Position 13 (serine 13) interacts with UTP. Residue 14-19 (GLGKGI) coordinates ATP. Tyrosine 54 provides a ligand contact to L-glutamine. Aspartate 71 contacts ATP. Mg(2+) is bound by residues aspartate 71 and glutamate 139. Residues 146–148 (DIE), 186–191 (KTKPTQ), and lysine 222 contribute to the CTP site. UTP is bound by residues 186–191 (KTKPTQ) and lysine 222. A Glutamine amidotransferase type-1 domain is found at 290–532 (EIAIVGKYVK…VRAAKEYKQE (243 aa)). Position 351 (glycine 351) interacts with L-glutamine. Cysteine 378 acts as the Nucleophile; for glutamine hydrolysis in catalysis. Residues 379 to 382 (FGFQ), glutamate 402, and arginine 459 contribute to the L-glutamine site. Active-site residues include histidine 505 and glutamate 507.

The protein belongs to the CTP synthase family. In terms of assembly, homotetramer.

It catalyses the reaction UTP + L-glutamine + ATP + H2O = CTP + L-glutamate + ADP + phosphate + 2 H(+). The catalysed reaction is L-glutamine + H2O = L-glutamate + NH4(+). It carries out the reaction UTP + NH4(+) + ATP = CTP + ADP + phosphate + 2 H(+). Its pathway is pyrimidine metabolism; CTP biosynthesis via de novo pathway; CTP from UDP: step 2/2. With respect to regulation, allosterically activated by GTP, when glutamine is the substrate; GTP has no effect on the reaction when ammonia is the substrate. The allosteric effector GTP functions by stabilizing the protein conformation that binds the tetrahedral intermediate(s) formed during glutamine hydrolysis. Inhibited by the product CTP, via allosteric rather than competitive inhibition. Catalyzes the ATP-dependent amination of UTP to CTP with either L-glutamine or ammonia as the source of nitrogen. Regulates intracellular CTP levels through interactions with the four ribonucleotide triphosphates. This Pyrococcus horikoshii (strain ATCC 700860 / DSM 12428 / JCM 9974 / NBRC 100139 / OT-3) protein is CTP synthase.